Here is a 167-residue protein sequence, read N- to C-terminus: Gametocyte-specific factor 1 homolog (167 aa).

CHHC U11-48K-type zinc fingers lie at residues 1-28 (MVYC…RVIY) and 34-61 (LMVC…EDRN). 8 residues coordinate Zn(2+): Cys4, His10, His20, Cys24, Cys37, His43, His53, and Cys57. Residues 128 to 161 (EKRRHFGEDYEEEKKPRKAKARADLRPTPYEHRR) show a composition bias toward basic and acidic residues. Residues 128-167 (EKRRHFGEDYEEEKKPRKAKARADLRPTPYEHRRPYSRRQ) are disordered.

Belongs to the UPF0224 (FAM112) family. Interacts with piwi.

The protein resides in the nucleus. In terms of biological role, acts via the piwi-interacting RNA (piRNA) pathway which mediates the repression of transposable elements during meiosis by forming complexes composed of piRNAs and piwi proteins and governs the methylation and subsequent repression of transposons. Required for repression of transposons and neighboring genes in ovarian somatic and germline cells. The sequence is that of Gametocyte-specific factor 1 homolog from Drosophila melanogaster (Fruit fly).